The sequence spans 279 residues: Arabinooligosaccharides transport system permease protein AraQ (279 aa).

A run of 6 helical transmembrane segments spans residues 8–28, 79–99, 110–130, 140–160, 184–204, and 245–265; these read ILSW…VFPL, VWIS…VGYA, FFFL…MLPL, VNTY…VFFF, GIFF…MAIL, and ILLA…IFFQ. The 190-residue stretch at 75 to 264 folds into the ABC transmembrane type-1 domain; it reads FGNSVWISIV…VPIVILFIFF (190 aa).

It belongs to the binding-protein-dependent transport system permease family. MalFG subfamily. In terms of assembly, the complex is composed of two ATP-binding proteins (MsmX), two transmembrane proteins (AraP and AraQ) and a solute-binding protein (AraN).

It localises to the cell membrane. In terms of biological role, part of the ABC transporter complex AraNPQ involved in the uptake of arabinooligosaccharides. Responsible for the translocation of the substrate across the membrane. This chain is Arabinooligosaccharides transport system permease protein AraQ (araQ), found in Halalkalibacterium halodurans (strain ATCC BAA-125 / DSM 18197 / FERM 7344 / JCM 9153 / C-125) (Bacillus halodurans).